Consider the following 159-residue polypeptide: NADH-quinone oxidoreductase subunit B (159 aa).

Cysteine 36, cysteine 37, cysteine 102, and cysteine 132 together coordinate [4Fe-4S] cluster.

Belongs to the complex I 20 kDa subunit family. In terms of assembly, NDH-1 is composed of 14 different subunits. Subunits NuoB, C, D, E, F, and G constitute the peripheral sector of the complex. [4Fe-4S] cluster serves as cofactor.

It localises to the cell inner membrane. The catalysed reaction is a quinone + NADH + 5 H(+)(in) = a quinol + NAD(+) + 4 H(+)(out). Functionally, NDH-1 shuttles electrons from NADH, via FMN and iron-sulfur (Fe-S) centers, to quinones in the respiratory chain. Couples the redox reaction to proton translocation (for every two electrons transferred, four hydrogen ions are translocated across the cytoplasmic membrane), and thus conserves the redox energy in a proton gradient. This Delftia acidovorans (strain DSM 14801 / SPH-1) protein is NADH-quinone oxidoreductase subunit B.